A 168-amino-acid chain; its full sequence is Protein OPG162 (168 aa).

Over Met1–Lys14 the chain is Intravirion. A helical membrane pass occupies residues Leu15–His37. Over Tyr38–Lys168 the chain is Virion surface. Residues Tyr54–Val163 enclose the C-type lectin domain. 2 disulfide bridges follow: Cys75-Cys162 and Cys141-Cys154. A glycan (N-linked (GlcNAc...) asparagine; by host) is linked at Asn133.

This sequence belongs to the orthopoxvirus OPG162 protein family. In terms of assembly, interacts with protein OPG161. Interacts with protein OPG164. Interacts with protein OPG190.

The protein resides in the virion membrane. Its subcellular location is the host Golgi apparatus. Its function is as follows. Forms a complex with OPG162 and OPG190 to coordinate the incorporation of OPG164 into wrapped enveloped virion (EV) membranes and, subsequently, the production of actin tails. Therefore plays an essential role in efficient cell-to-cell spread of viral particles. This Variola virus (isolate Human/India/Ind3/1967) (VARV) protein is Protein OPG162 (OPG162).